We begin with the raw amino-acid sequence, 376 residues long: Chaperone protein DnaJ (376 aa).

The region spanning 5 to 70 (DYYEVLGVGR…DKKAAYDQFG (66 aa)) is the J domain. The CR-type zinc-finger motif lies at 132–210 (GLTKELRIPT…CHGEGRVEKS (79 aa)). Residues cysteine 145, cysteine 148, cysteine 162, cysteine 165, cysteine 184, cysteine 187, cysteine 198, and cysteine 201 each coordinate Zn(2+). CXXCXGXG motif repeat units follow at residues 145–152 (CDSCDGSG), 162–169 (CGTCHGQG), 184–191 (CPTCHGRG), and 198–205 (CNKCHGEG).

The protein belongs to the DnaJ family. As to quaternary structure, homodimer. Zn(2+) is required as a cofactor.

The protein localises to the cytoplasm. Participates actively in the response to hyperosmotic and heat shock by preventing the aggregation of stress-denatured proteins and by disaggregating proteins, also in an autonomous, DnaK-independent fashion. Unfolded proteins bind initially to DnaJ; upon interaction with the DnaJ-bound protein, DnaK hydrolyzes its bound ATP, resulting in the formation of a stable complex. GrpE releases ADP from DnaK; ATP binding to DnaK triggers the release of the substrate protein, thus completing the reaction cycle. Several rounds of ATP-dependent interactions between DnaJ, DnaK and GrpE are required for fully efficient folding. Also involved, together with DnaK and GrpE, in the DNA replication of plasmids through activation of initiation proteins. The chain is Chaperone protein DnaJ from Shewanella pealeana (strain ATCC 700345 / ANG-SQ1).